Consider the following 81-residue polypeptide: Fungal defensin micasin (81 aa).

The first 21 residues, 1–21 (MQFTKLATILLVSLMGSAAIA), serve as a signal peptide directing secretion. Residues 22-43 (APATNNAAVDAAADATPAVEKR) constitute a propeptide that is removed on maturation. 3 cysteine pairs are disulfide-bonded: Cys47/Cys68, Cys54/Cys76, and Cys58/Cys78.

Belongs to the invertebrate defensin family.

The protein localises to the secreted. In terms of biological role, antibacterial peptide with potent activity against both Gram-positive and Gram-negative bacteria. May kill bacteria via an intracellular action mode to affect protein folding. Does not show effects on tested filamentous fungi or on the yeast S.cerevisiae. Does not act by destroying the membrane integrity, which is consistent with its nonamphiphilic architecture. Acts more rapidly than vancomycin, suggesting it does not act by inhibiting cell-wall biosynthesis. Does not cause hemolysis and has no cytotoxic effect on HEK cells. In vivo, is as efficient as vancomycin to protect mouse peritonitis models from S.aureus and P.aeruginosa infections. The polypeptide is Fungal defensin micasin (Arthroderma otae (Microsporum canis)).